We begin with the raw amino-acid sequence, 475 residues long: Sulfate adenylyltransferase subunit 1 (475 aa).

The tr-type G domain maps to 25-241 (KSLLRFLTCG…LENIEIQRVV (217 aa)). The interval 34–41 (GSVDDGKS) is G1. 34 to 41 (GSVDDGKS) lines the GTP pocket. Residues 92-96 (GITID) form a G2 region. A G3 region spans residues 113–116 (DTPG). GTP contacts are provided by residues 113–117 (DTPGH) and 168–171 (NKMD). Residues 168–171 (NKMD) are G4. Residues 206–208 (SAL) form a G5 region.

Belongs to the TRAFAC class translation factor GTPase superfamily. Classic translation factor GTPase family. CysN/NodQ subfamily. Heterodimer composed of CysD, the smaller subunit, and CysN.

The catalysed reaction is sulfate + ATP + H(+) = adenosine 5'-phosphosulfate + diphosphate. It participates in sulfur metabolism; hydrogen sulfide biosynthesis; sulfite from sulfate: step 1/3. Its function is as follows. With CysD forms the ATP sulfurylase (ATPS) that catalyzes the adenylation of sulfate producing adenosine 5'-phosphosulfate (APS) and diphosphate, the first enzymatic step in sulfur assimilation pathway. APS synthesis involves the formation of a high-energy phosphoric-sulfuric acid anhydride bond driven by GTP hydrolysis by CysN coupled to ATP hydrolysis by CysD. In Cronobacter sakazakii (strain ATCC BAA-894) (Enterobacter sakazakii), this protein is Sulfate adenylyltransferase subunit 1.